The following is a 486-amino-acid chain: MVATPSTSSQTKGVVRQVIGPVLDVEFPAGKLPKILNALRIEAKNPAGQDIALTAEVQQLLGDHRVRAVAMSGTDGLVRGMEAIDTGAPISVPVGEATLGRIFNVLGEPVDEQGPVNTKDTAPIHRAAPKLTDLETKPKVFETGIKVIDLLAPYRQGGKVGLFGGAGVGKTVLIQELINNIAKEHGGVSVFGGVGERTREGNDLYEEFKESGVINADDLTQSKVALCFGQMNEPPGARMRVGLSALTMAEHFRDVNKQDVLLFVDNIFRFVQAGSEVSALLGRMPSAVGYQPTLGTDVGELQERITSTLEGSITSIQAVYVPADDLTDPAPATTFAHLDATTVLARALAAKGIYPAVDPLDSTSTMLQPSVVGDEHYKTARAVQSTLQRYKELQDIIAILGLDELSEEDRLTVDRARKIEKFLSQPFFVAEIFTGMSGKYVKLEDTIAGFNMILSGELDDLPEQAFYLVGNIDEVKAKAEKINSEK.

Position 164–171 (164–171 (GGAGVGKT)) interacts with ATP.

The protein belongs to the ATPase alpha/beta chains family. As to quaternary structure, F-type ATPases have 2 components, CF(1) - the catalytic core - and CF(0) - the membrane proton channel. CF(1) has five subunits: alpha(3), beta(3), gamma(1), delta(1), epsilon(1). CF(0) has four main subunits: a(1), b(1), b'(1) and c(9-12).

Its subcellular location is the cellular thylakoid membrane. It catalyses the reaction ATP + H2O + 4 H(+)(in) = ADP + phosphate + 5 H(+)(out). Its function is as follows. Produces ATP from ADP in the presence of a proton gradient across the membrane. The catalytic sites are hosted primarily by the beta subunits. The sequence is that of ATP synthase subunit beta from Prochlorococcus marinus (strain MIT 9215).